Here is a 272-residue protein sequence, read N- to C-terminus: Shikimate dehydrogenase (NADP(+)) (272 aa).

Residues 14 to 16 and T61 contribute to the shikimate site; that span reads SKS. K65 acts as the Proton acceptor in catalysis. Position 77 (E77) interacts with NADP(+). Shikimate contacts are provided by N86 and D102. NADP(+) contacts are provided by residues 126 to 130, 149 to 154, and M213; these read GAGGA and NRTASR. Y215 is a binding site for shikimate. G237 contacts NADP(+).

Belongs to the shikimate dehydrogenase family. As to quaternary structure, homodimer.

It carries out the reaction shikimate + NADP(+) = 3-dehydroshikimate + NADPH + H(+). The protein operates within metabolic intermediate biosynthesis; chorismate biosynthesis; chorismate from D-erythrose 4-phosphate and phosphoenolpyruvate: step 4/7. Its function is as follows. Involved in the biosynthesis of the chorismate, which leads to the biosynthesis of aromatic amino acids. Catalyzes the reversible NADPH linked reduction of 3-dehydroshikimate (DHSA) to yield shikimate (SA). The protein is Shikimate dehydrogenase (NADP(+)) of Salmonella enteritidis PT4 (strain P125109).